A 471-amino-acid polypeptide reads, in one-letter code: Phosphoglycerate kinase (471 aa).

Residues 24–26 (DFN), Arg41, 64–67 (HLSR), Arg127, and Arg169 contribute to the substrate site. Residues Lys220, Gly307, Glu338, and 368–371 (GGDS) contribute to the ATP site. Residues 417–471 (KVEAVKEKTTTTTESASKEKSSTAKTASKPATSKTTAAKKPAEKKPAAKKPAAKK) are disordered. Positions 439–455 (TAKTASKPATSKTTAAK) are enriched in low complexity.

It belongs to the phosphoglycerate kinase family. In terms of assembly, monomer.

The protein resides in the cytoplasm. The catalysed reaction is (2R)-3-phosphoglycerate + ATP = (2R)-3-phospho-glyceroyl phosphate + ADP. It participates in carbohydrate degradation; glycolysis; pyruvate from D-glyceraldehyde 3-phosphate: step 2/5. This Malacoplasma penetrans (strain HF-2) (Mycoplasma penetrans) protein is Phosphoglycerate kinase.